The sequence spans 335 residues: Tetraacyldisaccharide 4'-kinase (335 aa).

Thr-59–Thr-66 is an ATP binding site.

Belongs to the LpxK family.

The enzyme catalyses a lipid A disaccharide + ATP = a lipid IVA + ADP + H(+). Its pathway is glycolipid biosynthesis; lipid IV(A) biosynthesis; lipid IV(A) from (3R)-3-hydroxytetradecanoyl-[acyl-carrier-protein] and UDP-N-acetyl-alpha-D-glucosamine: step 6/6. Its function is as follows. Transfers the gamma-phosphate of ATP to the 4'-position of a tetraacyldisaccharide 1-phosphate intermediate (termed DS-1-P) to form tetraacyldisaccharide 1,4'-bis-phosphate (lipid IVA). This Vibrio campbellii (strain ATCC BAA-1116) protein is Tetraacyldisaccharide 4'-kinase.